Consider the following 88-residue polypeptide: Small ribosomal subunit protein bS20 (88 aa).

Residues 1 to 16 (MANTHSAKKATRKITR) are compositionally biased toward basic residues. The segment at 1-20 (MANTHSAKKATRKITRRTAV) is disordered.

The protein belongs to the bacterial ribosomal protein bS20 family.

Its function is as follows. Binds directly to 16S ribosomal RNA. This is Small ribosomal subunit protein bS20 from Nitrobacter hamburgensis (strain DSM 10229 / NCIMB 13809 / X14).